Consider the following 95-residue polypeptide: Integration host factor subunit beta (95 aa).

The protein belongs to the bacterial histone-like protein family. As to quaternary structure, heterodimer of an alpha and a beta chain.

Functionally, this protein is one of the two subunits of integration host factor, a specific DNA-binding protein that functions in genetic recombination as well as in transcriptional and translational control. This is Integration host factor subunit beta from Shewanella loihica (strain ATCC BAA-1088 / PV-4).